The sequence spans 213 residues: Imidazole glycerol phosphate synthase subunit HisH 1 (213 aa).

Residues 4-213 enclose the Glutamine amidotransferase type-1 domain; it reads TVAVIDYGMG…QNFVAWDGRW (210 aa). C82 acts as the Nucleophile in catalysis. Residues H191 and E193 contribute to the active site.

As to quaternary structure, heterodimer of HisH and HisF.

Its subcellular location is the cytoplasm. The catalysed reaction is 5-[(5-phospho-1-deoxy-D-ribulos-1-ylimino)methylamino]-1-(5-phospho-beta-D-ribosyl)imidazole-4-carboxamide + L-glutamine = D-erythro-1-(imidazol-4-yl)glycerol 3-phosphate + 5-amino-1-(5-phospho-beta-D-ribosyl)imidazole-4-carboxamide + L-glutamate + H(+). The enzyme catalyses L-glutamine + H2O = L-glutamate + NH4(+). The protein operates within amino-acid biosynthesis; L-histidine biosynthesis; L-histidine from 5-phospho-alpha-D-ribose 1-diphosphate: step 5/9. In terms of biological role, IGPS catalyzes the conversion of PRFAR and glutamine to IGP, AICAR and glutamate. The HisH subunit provides the glutamine amidotransferase activity that produces the ammonia necessary to HisF for the synthesis of IGP and AICAR. This chain is Imidazole glycerol phosphate synthase subunit HisH 1 (hisH1), found in Pseudomonas aeruginosa (strain ATCC 15692 / DSM 22644 / CIP 104116 / JCM 14847 / LMG 12228 / 1C / PRS 101 / PAO1).